We begin with the raw amino-acid sequence, 252 residues long: JmjC domain-containing protein A (252 aa).

The region spanning 103-252 is the JmjC domain; it reads PYLRNFGMLD…VSCWGKEMIM (150 aa).

The polypeptide is JmjC domain-containing protein A (jcdA) (Dictyostelium discoideum (Social amoeba)).